The primary structure comprises 637 residues: Sec1 family domain-containing protein 1 (637 aa).

Phosphoserine is present on residues Ser32, Ser298, and Ser523.

This sequence belongs to the STXBP/unc-18/SEC1 family. Interacts with STX17. Interacts with the COG complex via COG4. Interacts with STX5A. As to expression, highly expressed in testis. Detected at lower levels in brain, astrocytes, heart and small intestine.

Its subcellular location is the cytoplasm. It localises to the endoplasmic reticulum membrane. The protein resides in the golgi apparatus. The protein localises to the golgi stack membrane. Plays a role in SNARE-pin assembly and Golgi-to-ER retrograde transport via its interaction with COG4. Involved in vesicular transport between the endoplasmic reticulum and the Golgi. The protein is Sec1 family domain-containing protein 1 (Scfd1) of Rattus norvegicus (Rat).